The sequence spans 464 residues: Glutamate--tRNA ligase (464 aa).

A 'HIGH' region motif is present at residues 8–18 (PSPTGYMHLGN). Zn(2+)-binding residues include Cys96, Cys98, Cys123, and His125. The short motif at 240 to 244 (KLSKR) is the 'KMSKS' region element. Lys243 contributes to the ATP binding site.

This sequence belongs to the class-I aminoacyl-tRNA synthetase family. Glutamate--tRNA ligase type 1 subfamily. Monomer. Zn(2+) is required as a cofactor.

The protein resides in the cytoplasm. The catalysed reaction is tRNA(Glu) + L-glutamate + ATP = L-glutamyl-tRNA(Glu) + AMP + diphosphate. Its function is as follows. Catalyzes the attachment of glutamate to tRNA(Glu) in a two-step reaction: glutamate is first activated by ATP to form Glu-AMP and then transferred to the acceptor end of tRNA(Glu). This Hydrogenobaculum sp. (strain Y04AAS1) protein is Glutamate--tRNA ligase.